The sequence spans 162 residues: Regulatory protein RecX (162 aa).

Belongs to the RecX family.

It localises to the cytoplasm. Functionally, modulates RecA activity. This chain is Regulatory protein RecX, found in Pectobacterium atrosepticum (strain SCRI 1043 / ATCC BAA-672) (Erwinia carotovora subsp. atroseptica).